Here is a 223-residue protein sequence, read N- to C-terminus: Deoxyribose-phosphate aldolase (223 aa).

The active-site Proton donor/acceptor is Asp89. Residue Lys152 is the Schiff-base intermediate with acetaldehyde of the active site. Lys181 acts as the Proton donor/acceptor in catalysis.

Belongs to the DeoC/FbaB aldolase family. DeoC type 1 subfamily.

It is found in the cytoplasm. It carries out the reaction 2-deoxy-D-ribose 5-phosphate = D-glyceraldehyde 3-phosphate + acetaldehyde. Its pathway is carbohydrate degradation; 2-deoxy-D-ribose 1-phosphate degradation; D-glyceraldehyde 3-phosphate and acetaldehyde from 2-deoxy-alpha-D-ribose 1-phosphate: step 2/2. In terms of biological role, catalyzes a reversible aldol reaction between acetaldehyde and D-glyceraldehyde 3-phosphate to generate 2-deoxy-D-ribose 5-phosphate. In Listeria welshimeri serovar 6b (strain ATCC 35897 / DSM 20650 / CCUG 15529 / CIP 8149 / NCTC 11857 / SLCC 5334 / V8), this protein is Deoxyribose-phosphate aldolase.